We begin with the raw amino-acid sequence, 362 residues long: uncharacterized protein (362 aa).

Residues 314–323 show a composition bias toward basic and acidic residues; the sequence is GEEKEPKQES. Residues 314-362 form a disordered region; the sequence is GEEKEPKQESQEQLFNPFTIDEMLTEEQQQQQEEENNATEEEGDTVKLG. A compositionally biased stretch (acidic residues) spans 345–356; the sequence is QEEENNATEEEG.

This is an uncharacterized protein from Acidianus two-tailed virus (ATV).